The chain runs to 434 residues: Pre-B-cell leukemia transcription factor 3 (434 aa).

The disordered stretch occupies residues 20–41 (SVQGGMALPPPPHGHEGADGDG). Residues 32–41 (HGHEGADGDG) are compositionally biased toward basic and acidic residues. In terms of domain architecture, PBC spans 41–234 (GRKQDIGDIL…VMILRSRFLD (194 aa)). The tract at residues 48–127 (DILHQIMTIT…EGVSGPEKGG (80 aa)) is PBC-A. Positions 130 to 234 (AAAAAAAAAS…VMILRSRFLD (105 aa)) are PBC-B. The homeobox; TALE-type DNA-binding region spans 235 to 297 (ARRKRRNFSK…NKRIRYKKNI (63 aa)). Positions 326-341 (NQTNSPTTPNSGSSGS) are enriched in low complexity. 2 disordered regions span residues 326–349 (NQTNSPTTPNSGSSGSFNLPNSGD) and 403–434 (LNANGGWQDATTPSSVTSPTEGPGSVHSDTSN). The span at 403–422 (LNANGGWQDATTPSSVTSPT) shows a compositional bias: polar residues.

This sequence belongs to the TALE/PBX homeobox family. Interacts with PBXIP1. In terms of tissue distribution, ubiquitously expressed.

The protein localises to the nucleus. Its function is as follows. Transcriptional activator that binds the sequence 5'-ATCAATCAA-3'. This Homo sapiens (Human) protein is Pre-B-cell leukemia transcription factor 3 (PBX3).